The sequence spans 904 residues: Alanine--tRNA ligase (904 aa).

Residues His600, His604, Cys704, and His708 each coordinate Zn(2+).

This sequence belongs to the class-II aminoacyl-tRNA synthetase family. Requires Zn(2+) as cofactor.

The protein localises to the cytoplasm. The enzyme catalyses tRNA(Ala) + L-alanine + ATP = L-alanyl-tRNA(Ala) + AMP + diphosphate. Catalyzes the attachment of alanine to tRNA(Ala) in a two-step reaction: alanine is first activated by ATP to form Ala-AMP and then transferred to the acceptor end of tRNA(Ala). Also edits incorrectly charged Ser-tRNA(Ala) and Gly-tRNA(Ala) via its editing domain. In Metallosphaera sedula (strain ATCC 51363 / DSM 5348 / JCM 9185 / NBRC 15509 / TH2), this protein is Alanine--tRNA ligase.